Reading from the N-terminus, the 237-residue chain is Glutathione-independent glyoxalase HSP31 (237 aa).

Active-site residues include Cys138, His139, and Glu170. Cys138 is subject to Cysteine sulfinic acid (-SO2H).

The protein belongs to the peptidase C56 family. HSP31-like subfamily. As to quaternary structure, homodimer. Cys-138 is easily oxidized to sulfinic acid.

It is found in the cytoplasm. The protein resides in the P-body. It carries out the reaction methylglyoxal + H2O = (R)-lactate + H(+). In terms of biological role, catalyzes the conversion of methylglyoxal (MG) to D-lactate in a single glutathione (GSH)-independent step. May play a role in detoxifying endogenously produced glyoxals. Involved in protection against reactive oxygen species (ROS). Important for viability in stationary phase. May negatively regulate TORC1 in response to nutrient limitation. The chain is Glutathione-independent glyoxalase HSP31 from Saccharomyces cerevisiae (strain ATCC 204508 / S288c) (Baker's yeast).